The sequence spans 721 residues: Polyribonucleotide nucleotidyltransferase (721 aa).

Residues aspartate 495 and aspartate 501 each coordinate Mg(2+). The KH domain occupies 562–621 (PRLLSFRIDPELIGTVIGPGGRTIKGITERTNTKIDIEDSGIVTIASHDGAAADEAQKII). Positions 631–699 (GEVFSGSITR…NRGRINLTLR (69 aa)) constitute an S1 motif domain. The interval 698–721 (LRGVPQSGDGAGEEPQPTPVAPLS) is disordered.

It belongs to the polyribonucleotide nucleotidyltransferase family. The cofactor is Mg(2+).

It localises to the cytoplasm. It carries out the reaction RNA(n+1) + phosphate = RNA(n) + a ribonucleoside 5'-diphosphate. Its function is as follows. Involved in mRNA degradation. Catalyzes the phosphorolysis of single-stranded polyribonucleotides processively in the 3'- to 5'-direction. This Parasynechococcus marenigrum (strain WH8102) protein is Polyribonucleotide nucleotidyltransferase.